We begin with the raw amino-acid sequence, 290 residues long: Light-independent protochlorophyllide reductase iron-sulfur ATP-binding protein (290 aa).

ATP-binding positions include 10-15 (GIGKST) and Lys39. Ser14 provides a ligand contact to Mg(2+). Residues Cys95 and Cys129 each coordinate [4Fe-4S] cluster. 180-181 (NR) contributes to the ATP binding site.

It belongs to the NifH/BchL/ChlL family. In terms of assembly, homodimer. Protochlorophyllide reductase is composed of three subunits; ChlL, ChlN and ChlB. The cofactor is [4Fe-4S] cluster.

It is found in the plastid. The protein resides in the chloroplast. It carries out the reaction chlorophyllide a + oxidized 2[4Fe-4S]-[ferredoxin] + 2 ADP + 2 phosphate = protochlorophyllide a + reduced 2[4Fe-4S]-[ferredoxin] + 2 ATP + 2 H2O. It participates in porphyrin-containing compound metabolism; chlorophyll biosynthesis (light-independent). Component of the dark-operative protochlorophyllide reductase (DPOR) that uses Mg-ATP and reduced ferredoxin to reduce ring D of protochlorophyllide (Pchlide) to form chlorophyllide a (Chlide). This reaction is light-independent. The L component serves as a unique electron donor to the NB-component of the complex, and binds Mg-ATP. The sequence is that of Light-independent protochlorophyllide reductase iron-sulfur ATP-binding protein from Chaetosphaeridium globosum (Charophycean green alga).